The primary structure comprises 555 residues: Formate--tetrahydrofolate ligase (555 aa).

Position 63-70 (63-70 (TPAGEGKT)) interacts with ATP.

Belongs to the formate--tetrahydrofolate ligase family.

It carries out the reaction (6S)-5,6,7,8-tetrahydrofolate + formate + ATP = (6R)-10-formyltetrahydrofolate + ADP + phosphate. Its pathway is one-carbon metabolism; tetrahydrofolate interconversion. The sequence is that of Formate--tetrahydrofolate ligase from Beijerinckia indica subsp. indica (strain ATCC 9039 / DSM 1715 / NCIMB 8712).